Reading from the N-terminus, the 204-residue chain is Calexcitin-1 (204 aa).

EF-hand domains are found at residues 25–61 (FLVKKWERIFSLFFDRNASHQVDWGDFYLVVKKVRDI), 75–110 (SLAALWEGLCSIADADKDQLISIDEWIGLLKKTDAK), and 115–150 (WFKDYQNFMFKLFDVSCDGVMDLAEYTDGMSTYGFD). Residues aspartate 39, asparagine 41, serine 43, glutamine 45, aspartate 50, aspartate 88, aspartate 90, aspartate 92, glutamate 99, aspartate 128, serine 130, aspartate 132, and glutamate 139 each contribute to the Ca(2+) site.

The polypeptide is Calexcitin-1 (cex-1) (Caenorhabditis elegans).